The chain runs to 1722 residues: Signal-induced proliferation-associated 1-like protein 2 (1722 aa).

Disordered regions lie at residues 1–29 (MSDP…RTMQ) and 44–72 (SMGP…TPAV). Over residues 57-66 (EGGGGGGGPA) the composition is skewed to gly residues. A phosphoserine mark is found at Ser149, Ser380, and Ser384. A disordered region spans residues 362-405 (ASAASQTPVPVGPAGGCESPLGSKEDLNSKENPDADEGDGKSND). Over residues 384 to 403 (SKEDLNSKENPDADEGDGKS) the composition is skewed to basic and acidic residues. Positions 596 to 813 (LLKLDEQGLS…RTRQEYLKDL (218 aa)) constitute a Rap-GAP domain. The region spanning 951 to 1027 (EMTLRRNGLG…VKVVIIQPHE (77 aa)) is the PDZ domain. Residue Ser1030 is modified to Phosphoserine. Disordered stretches follow at residues 1068 to 1246 (HRVP…FGSG) and 1331 to 1360 (GSMG…SKST). 2 stretches are compositionally biased toward low complexity: residues 1091-1103 (LQCQ…AQAA) and 1120-1131 (SSPSNQSSSSDP). Positions 1195–1218 (YKERVLQKDGSCKESPNKLSHIGD) are enriched in basic and acidic residues. Low complexity predominate over residues 1220-1237 (SCSSHSSSNTLSSNTSSN). A Phosphoserine modification is found at Ser1245. The span at 1331-1355 (GSMGDLSEVSSHSSGSQHSGSPSAH) shows a compositional bias: low complexity. Phosphoserine occurs at positions 1461, 1472, 1478, 1488, 1549, 1552, and 1591. Residues 1652–1712 (STLTGKVNQL…ATAQLRKFTE (61 aa)) are a coiled coil.

In Mus musculus (Mouse), this protein is Signal-induced proliferation-associated 1-like protein 2 (Sipa1l2).